The primary structure comprises 201 residues: MEQLTARQTEVLQIITRHLETCGYPPTLREIAAQLGISGTLGVMKHLEALEKKGYLRRQEGSTRGITLCNQSQAASLPIVGVVRAGLLHPAIQDIEGHFAIDRSQLASGGAFFLRVKGDSMVHAHIVEGDLALVRPQPHASNRDIVVAMVDGEATLKRFYREADRIRLQPENPNYEPIIIEKGEQEVSIVGKVVGIYRQME.

Residues 28 to 48 (LREIAAQLGISGTLGVMKHLE) constitute a DNA-binding region (H-T-H motif). Active-site for autocatalytic cleavage activity residues include S120 and K157.

This sequence belongs to the peptidase S24 family. In terms of assembly, homodimer.

It carries out the reaction Hydrolysis of Ala-|-Gly bond in repressor LexA.. Functionally, represses a number of genes involved in the response to DNA damage (SOS response), including recA and lexA. In the presence of single-stranded DNA, RecA interacts with LexA causing an autocatalytic cleavage which disrupts the DNA-binding part of LexA, leading to derepression of the SOS regulon and eventually DNA repair. The chain is LexA repressor from Citrifermentans bemidjiense (strain ATCC BAA-1014 / DSM 16622 / JCM 12645 / Bem) (Geobacter bemidjiensis).